A 1935-amino-acid polypeptide reads, in one-letter code: Myosin-7 (1935 aa).

The 50-residue stretch at 32 to 81 folds into the Myosin N-terminal SH3-like domain; that stretch reads DLKKDVFVPDDKEEFVKAKIISREGGKITAETEHGKTVTVKEDQVLQQNP. A Myosin motor domain is found at 85-778; it reads DKIEDMAMLT…LLGLLEEMRD (694 aa). Position 129 is an N6,N6,N6-trimethyllysine (Lys129). 178-185 contributes to the ATP binding site; it reads GESGAGKT. Phosphothreonine is present on Thr378. Actin-binding stretches follow at residues 655 to 677 and 757 to 771; these read LNKL…IPNE and RFGH…GLLG. Positions 781–810 constitute an IQ domain; sequence LSRIITRIQAQSRGVLARMEFKKLLERRDS. A coiled-coil region spans residues 839-1935; sequence LLKSAETEKE…DIGTKGLNEE (1097 aa). Phosphoserine occurs at positions 1137 and 1269. Thr1282 carries the phosphothreonine modification. The residue at position 1308 (Tyr1308) is a Phosphotyrosine. The residue at position 1309 (Thr1309) is a Phosphothreonine. Ser1510 bears the Phosphoserine mark. Thr1513 is subject to Phosphothreonine. Residues 1907 to 1935 form a disordered region; that stretch reads EERADIAESQVNKLRAKSRDIGTKGLNEE. Residues 1923–1935 show a composition bias toward basic and acidic residues; it reads KSRDIGTKGLNEE.

It belongs to the TRAFAC class myosin-kinesin ATPase superfamily. Myosin family. In terms of assembly, muscle myosin is a hexameric protein that consists of 2 heavy chain subunits (MHC), 2 alkali light chain subunits (MLC) and 2 regulatory light chain subunits (MLC-2). Interacts with ECPAS. Interacts (via C-terminus) with LRRC39.

The protein localises to the cytoplasm. The protein resides in the myofibril. Its subcellular location is the sarcomere. Myosins are actin-based motor molecules with ATPase activity essential for muscle contraction. Forms regular bipolar thick filaments that, together with actin thin filaments, constitute the fundamental contractile unit of skeletal and cardiac muscle. The chain is Myosin-7 (MYH7) from Equus caballus (Horse).